The primary structure comprises 514 residues: Cytochrome P450 87A3 (514 aa).

2 consecutive transmembrane segments (helical) span residues 36 to 56 and 315 to 335; these read ASSM…VALL and LMFV…TIGV. A heme-binding site is contributed by Cys-463.

The protein belongs to the cytochrome P450 family. Requires heme as cofactor. As to expression, expressed in roots and coleoptiles, but not in leaves.

It is found in the cytoplasmic vesicle membrane. This is Cytochrome P450 87A3 (CYP87A3) from Oryza sativa subsp. japonica (Rice).